The following is a 59-amino-acid chain: Large ribosomal subunit protein bL32c (59 aa).

A disordered region spans residues 37–59 (SRSFSSGNEHPKPKGFSGQQANK).

The protein belongs to the bacterial ribosomal protein bL32 family.

It localises to the plastid. It is found in the chloroplast. This Saccharum hybrid (Sugarcane) protein is Large ribosomal subunit protein bL32c.